The chain runs to 560 residues: Developmental and secondary metabolism regulator veA (560 aa).

Residues 35 to 241 enclose the Velvet domain; that stretch reads GRRLWYRMRV…AEQGCRVRIR (207 aa). The Nuclear localization signal signature appears at 49–54; the sequence is ERARAC. Disordered regions lie at residues 49-70, 171-197, and 250-560; these read ERAR…VDPP, KEDK…ATGG, and DGKG…RLRY. Residues 171 to 183 are compositionally biased toward basic and acidic residues; sequence KEDKDKDKERDVE. Residues 336 to 355 show a composition bias toward pro residues; the sequence is AAPPQPFAQPPSVPASPVYP. Over residues 395 to 405 the composition is skewed to basic and acidic residues; the sequence is PRRESIHHDYR. Positions 411–439 are enriched in pro residues; sequence QLPPLPPPPYYPPTPQQSHMPPPQPPQVL. A compositionally biased stretch (polar residues) spans 444–453; it reads IDSNSKSNNR. The segment at 455 to 496 is PEST; sequence PMPSPTALANSAPRPLASLAPLAPLMQSTSSSAGKGPVHPAT. Residues 461–479 are compositionally biased toward low complexity; the sequence is ALANSAPRPLASLAPLAPL. Composition is skewed to basic and acidic residues over residues 508-535 and 546-560; these read RAHD…RSED and RRAD…RLRY.

The protein belongs to the velvet family. VeA subfamily. In terms of assembly, component of the heterotrimeric velvet complex composed of laeA, veA and velB; VeA acting as a bridging protein between laeA and velB.

It localises to the nucleus. The protein localises to the cytoplasm. Functionally, component of the velvet transcription factor complex that controls sexual/asexual developmental ratio in response to light, promoting sexual development in the darkness while stimulating asexual sporulation under illumination. The velvet complex acts as a global regulator for secondary metabolite gene expression. Positively regulates chaetoglobosin A biosynthesis by controlling the expression of core genes of the chaetoglobosin A biosynthetic gene cluster and other relevant regulators in a light-dependent manner. VeA directly regulates transcription factors brlA, laeA, and the chaetoglobosin A cluster-specific transcription regulator cheR. Also directly regulates the expression of one of the chaetoglobosin A cluster cytochrome P450 monooxygenases (cheE or cheG), but only indirectly regulates the expression of the PKS-NRPS hybrid cheA. Moreover, VeA has a significant effect on the asexual spores production, irrespective of light or dark condition. The protein is Developmental and secondary metabolism regulator veA of Chaetomium globosum (strain ATCC 6205 / CBS 148.51 / DSM 1962 / NBRC 6347 / NRRL 1970) (Soil fungus).